Consider the following 357-residue polypeptide: tRNA N6-adenosine threonylcarbamoyltransferase (357 aa).

The Fe cation site is built by H119 and H123. Substrate is bound by residues L141 to G145, D174, G187, and N284. Residue D312 coordinates Fe cation.

The protein belongs to the KAE1 / TsaD family. Fe(2+) is required as a cofactor.

The protein resides in the cytoplasm. It carries out the reaction L-threonylcarbamoyladenylate + adenosine(37) in tRNA = N(6)-L-threonylcarbamoyladenosine(37) in tRNA + AMP + H(+). In terms of biological role, required for the formation of a threonylcarbamoyl group on adenosine at position 37 (t(6)A37) in tRNAs that read codons beginning with adenine. Is involved in the transfer of the threonylcarbamoyl moiety of threonylcarbamoyl-AMP (TC-AMP) to the N6 group of A37, together with TsaE and TsaB. TsaD likely plays a direct catalytic role in this reaction. The protein is tRNA N6-adenosine threonylcarbamoyltransferase of Pelagibacter ubique (strain HTCC1062).